We begin with the raw amino-acid sequence, 194 residues long: uncharacterized protein (194 aa).

One can recognise an HTH tetR-type domain in the interval 6–66; that stretch reads SGKYEKILQA…AIAENLLTHT (61 aa). The H-T-H motif DNA-binding region spans 29–48; it reads SISDIVKKAGTAQGTFYLYF.

This is an uncharacterized protein from Bacillus subtilis (strain 168).